The following is a 359-amino-acid chain: tRNA-specific 2-thiouridylase MnmA (359 aa).

Residues 6–13 and Leu-32 contribute to the ATP site; that span reads AMSGGVDS. Residue Cys-97 is the Nucleophile of the active site. A disulfide bridge connects residues Cys-97 and Cys-195. Gly-121 provides a ligand contact to ATP. An interaction with tRNA region spans residues 144 to 146; it reads KDQ. The active-site Cysteine persulfide intermediate is Cys-195.

The protein belongs to the MnmA/TRMU family.

It is found in the cytoplasm. It carries out the reaction S-sulfanyl-L-cysteinyl-[protein] + uridine(34) in tRNA + AH2 + ATP = 2-thiouridine(34) in tRNA + L-cysteinyl-[protein] + A + AMP + diphosphate + H(+). Its function is as follows. Catalyzes the 2-thiolation of uridine at the wobble position (U34) of tRNA, leading to the formation of s(2)U34. This Tropheryma whipplei (strain TW08/27) (Whipple's bacillus) protein is tRNA-specific 2-thiouridylase MnmA.